The following is a 177-amino-acid chain: Ribulose bisphosphate carboxylase small subunit, chloroplastic 2 (177 aa).

A chloroplast-targeting transit peptide spans 1–56 (MASSMMASTAAVARAGPAQSNMVAPFNGLRSSVAFPATRKANKNLSTLPSNGGKVS).

It belongs to the RuBisCO small chain family. As to quaternary structure, heterohexadecamer of 8 large and 8 small subunits.

The protein localises to the plastid. It is found in the chloroplast. RuBisCO catalyzes two reactions: the carboxylation of D-ribulose 1,5-bisphosphate, the primary event in carbon dioxide fixation, as well as the oxidative fragmentation of the pentose substrate. Both reactions occur simultaneously and in competition at the same active site. Although the small subunit is not catalytic it is essential for maximal activity. The protein is Ribulose bisphosphate carboxylase small subunit, chloroplastic 2 of Lemna gibba (Swollen duckweed).